We begin with the raw amino-acid sequence, 339 residues long: Isopentenyl-diphosphate delta-isomerase (339 aa).

Substrate is bound at residue R7–K8. FMN-binding positions include S65, S66–T68, S96, and N125. Substrate is bound at residue S96–R98. Residue Q160 coordinates substrate. E161 is a binding site for Mg(2+). FMN contacts are provided by residues K192, T222, and A293–G294.

Belongs to the IPP isomerase type 2 family. In terms of assembly, homooctamer. Dimer of tetramers. The cofactor is FMN. NADPH serves as cofactor. Requires Mg(2+) as cofactor.

The protein localises to the cytoplasm. It catalyses the reaction isopentenyl diphosphate = dimethylallyl diphosphate. Its function is as follows. Involved in the biosynthesis of isoprenoids. Catalyzes the 1,3-allylic rearrangement of the homoallylic substrate isopentenyl (IPP) to its allylic isomer, dimethylallyl diphosphate (DMAPP). In Vibrio campbellii (strain ATCC BAA-1116), this protein is Isopentenyl-diphosphate delta-isomerase.